The chain runs to 409 residues: Microfibrillar-associated protein 3-like (409 aa).

The N-terminal stretch at 1–28 (MGLLKSHLTVCLPPSVPFLILVSTLATA) is a signal peptide. The Extracellular segment spans residues 29-148 (KSVTNSTLNG…TLRVIFTSGD (120 aa)). N-linked (GlcNAc...) asparagine glycans are attached at residues Asn33, Asn37, Asn67, Asn111, and Asn135. The region spanning 47 to 141 (PVIIARTDHI…GTINNTVTLR (95 aa)) is the Ig-like C2-type domain. A disulfide bond links Cys68 and Cys125. The helical transmembrane segment at 149 to 169 (MGVYYMVVCLVAFTIVMILNI) threads the bilayer. At 170–409 (TRLCMMSSHL…NTCIIYESHV (240 aa)) the chain is on the cytoplasmic side. Tyr287 carries the phosphotyrosine modification. Phosphoserine occurs at positions 298, 303, 306, and 307. The interval 319 to 392 (VSVHPQSKKD…LPPAHLETTE (74 aa)) is disordered. Residues 333–348 (QEGENLEVKDEEETEP) show a composition bias toward acidic residues. Residues 362 to 372 (DITTTELTSEE) are compositionally biased toward polar residues.

The protein resides in the cell membrane. The protein localises to the nucleus. It is found in the cytoplasm. May participate in the nuclear signaling of EGFR and MAPK1/ERK2. The polypeptide is Microfibrillar-associated protein 3-like (Mfap3l) (Rattus norvegicus (Rat)).